Reading from the N-terminus, the 204-residue chain is Holliday junction branch migration complex subunit RuvA (204 aa).

Positions Met1–Leu63 are domain I. Positions Thr64–Lys142 are domain II. The tract at residues Glu143–Asn149 is flexible linker. Residues Ile150–Ser204 form a domain III region.

Belongs to the RuvA family. As to quaternary structure, homotetramer. Forms an RuvA(8)-RuvB(12)-Holliday junction (HJ) complex. HJ DNA is sandwiched between 2 RuvA tetramers; dsDNA enters through RuvA and exits via RuvB. An RuvB hexamer assembles on each DNA strand where it exits the tetramer. Each RuvB hexamer is contacted by two RuvA subunits (via domain III) on 2 adjacent RuvB subunits; this complex drives branch migration. In the full resolvosome a probable DNA-RuvA(4)-RuvB(12)-RuvC(2) complex forms which resolves the HJ.

Its subcellular location is the cytoplasm. Its function is as follows. The RuvA-RuvB-RuvC complex processes Holliday junction (HJ) DNA during genetic recombination and DNA repair, while the RuvA-RuvB complex plays an important role in the rescue of blocked DNA replication forks via replication fork reversal (RFR). RuvA specifically binds to HJ cruciform DNA, conferring on it an open structure. The RuvB hexamer acts as an ATP-dependent pump, pulling dsDNA into and through the RuvAB complex. HJ branch migration allows RuvC to scan DNA until it finds its consensus sequence, where it cleaves and resolves the cruciform DNA. The chain is Holliday junction branch migration complex subunit RuvA from Rickettsia rickettsii (strain Iowa).